A 233-amino-acid polypeptide reads, in one-letter code: MAEETQNTVATESNNEDRKGRRGQRGEGRRGERRNRREENHGDELLDRVVTINRVSKTHKGGRTFSFAALVVVGDGNGTVGVGYGKSREVPAAIAKGQLDAKKHMFSVPRVRGTITHPVQGHDAAGTVLLRPAAPGTGVIAGGSVRAVMECAGITDVLTKSMGSATAVNVVRATVDALKQLEEPEEIAARRGLALDEVAPDALLRARAAGIAEARKAREEAAAAKAAEEKDGE.

Polar residues predominate over residues 1-13 (MAEETQNTVATES). The segment at 1-40 (MAEETQNTVATESNNEDRKGRRGQRGEGRRGERRNRREEN) is disordered. Residues 15 to 40 (NEDRKGRRGQRGEGRRGERRNRREEN) are compositionally biased toward basic and acidic residues. Residues 45–108 (LLDRVVTINR…LDAKKHMFSV (64 aa)) form the S5 DRBM domain.

The protein belongs to the universal ribosomal protein uS5 family. As to quaternary structure, part of the 30S ribosomal subunit. Contacts proteins S4 and S8.

Its function is as follows. With S4 and S12 plays an important role in translational accuracy. Located at the back of the 30S subunit body where it stabilizes the conformation of the head with respect to the body. The polypeptide is Small ribosomal subunit protein uS5 (Bifidobacterium longum (strain NCC 2705)).